A 98-amino-acid polypeptide reads, in one-letter code: uncharacterized protein (98 aa).

2 helical membrane passes run 8–28 (LILKFNMISFFSAVSLLHYFL) and 73–93 (LWFILYKVLICIYTYSISISL).

Its subcellular location is the membrane. This is an uncharacterized protein from Saccharomyces cerevisiae (strain ATCC 204508 / S288c) (Baker's yeast).